The primary structure comprises 258 residues: F-box/SPRY domain-containing protein 1 (258 aa).

In terms of domain architecture, F-box spans 6–54 (MEYAPNIPDNVLELIFSFLKLQDLRNCTLVCKSWYRFFCDENNEVWRAQ). The 193-residue stretch at 64–256 (FKNDLLTVVP…ISMVYLGAPL (193 aa)) folds into the B30.2/SPRY domain.

Belongs to the FBXO45/Fsn family. In terms of assembly, component of an E3 ubiquitin ligase complex composed of hiw and Fsn.

It is found in the synapse. It participates in protein modification; protein ubiquitination. Functionally, required in the presynaptic motoneuron to down-regulate the levels of wnd and restrain synaptic terminal growth at the neuromuscular junction (NMJ). This Anopheles gambiae (African malaria mosquito) protein is F-box/SPRY domain-containing protein 1.